Reading from the N-terminus, the 165-residue chain is Phosphopantetheine adenylyltransferase (165 aa).

Substrate is bound at residue threonine 9. Residues 9–10 and histidine 17 each bind ATP; that span reads TF. Substrate-binding residues include lysine 41, leucine 73, and arginine 87. ATP-binding positions include 88–90, glutamate 98, and 123–129; these read GLR and YQFISGT.

The protein belongs to the bacterial CoaD family. Homohexamer. It depends on Mg(2+) as a cofactor.

It localises to the cytoplasm. It carries out the reaction (R)-4'-phosphopantetheine + ATP + H(+) = 3'-dephospho-CoA + diphosphate. Its pathway is cofactor biosynthesis; coenzyme A biosynthesis; CoA from (R)-pantothenate: step 4/5. Functionally, reversibly transfers an adenylyl group from ATP to 4'-phosphopantetheine, yielding dephospho-CoA (dPCoA) and pyrophosphate. In Burkholderia orbicola (strain MC0-3), this protein is Phosphopantetheine adenylyltransferase.